The primary structure comprises 207 residues: NADH-quinone oxidoreductase subunit C (207 aa).

Belongs to the complex I 30 kDa subunit family. NDH-1 is composed of 14 different subunits. Subunits NuoB, C, D, E, F, and G constitute the peripheral sector of the complex.

Its subcellular location is the cell inner membrane. It carries out the reaction a quinone + NADH + 5 H(+)(in) = a quinol + NAD(+) + 4 H(+)(out). In terms of biological role, NDH-1 shuttles electrons from NADH, via FMN and iron-sulfur (Fe-S) centers, to quinones in the respiratory chain. The immediate electron acceptor for the enzyme in this species is believed to be ubiquinone. Couples the redox reaction to proton translocation (for every two electrons transferred, four hydrogen ions are translocated across the cytoplasmic membrane), and thus conserves the redox energy in a proton gradient. The polypeptide is NADH-quinone oxidoreductase subunit C (Jannaschia sp. (strain CCS1)).